The following is a 328-amino-acid chain: Glycerophosphodiester phosphodiesterase GDPD4 (328 aa).

Residues 35–55 (TILFAVIFLAIFPPLYFHFKL) traverse the membrane as a helical segment. One can recognise a GP-PDE domain in the interval 73 to 312 (PLVCAHGGDS…SDPSMFQGLM (240 aa)).

This sequence belongs to the glycerophosphoryl diester phosphodiesterase family. As to expression, expressed in rosette and cauline leaves.

It is found in the membrane. The enzyme catalyses a sn-glycero-3-phosphodiester + H2O = an alcohol + sn-glycerol 3-phosphate + H(+). The polypeptide is Glycerophosphodiester phosphodiesterase GDPD4 (Arabidopsis thaliana (Mouse-ear cress)).